The chain runs to 147 residues: Peroxynitrite isomerase (147 aa).

His-137 is a heme b binding site.

This sequence belongs to the nitrobindin family. In terms of assembly, homodimer. The cofactor is heme b.

It carries out the reaction peroxynitrite = nitrate. It participates in nitrogen metabolism. Its function is as follows. Heme-binding protein able to scavenge peroxynitrite and to protect free L-tyrosine against peroxynitrite-mediated nitration, by acting as a peroxynitrite isomerase that converts peroxynitrite to nitrate. Therefore, this protein likely plays a role in peroxynitrite sensing and in the detoxification of reactive nitrogen and oxygen species (RNS and ROS, respectively). Is able to bind nitric oxide (NO) in vitro, but may act as a sensor of peroxynitrite levels in vivo. The protein is Peroxynitrite isomerase of Frankia alni (strain DSM 45986 / CECT 9034 / ACN14a).